The primary structure comprises 176 residues: Peptide methionine sulfoxide reductase MsrA (176 aa).

C10 is an active-site residue.

The protein belongs to the MsrA Met sulfoxide reductase family.

It carries out the reaction L-methionyl-[protein] + [thioredoxin]-disulfide + H2O = L-methionyl-(S)-S-oxide-[protein] + [thioredoxin]-dithiol. The catalysed reaction is [thioredoxin]-disulfide + L-methionine + H2O = L-methionine (S)-S-oxide + [thioredoxin]-dithiol. Has an important function as a repair enzyme for proteins that have been inactivated by oxidation. Catalyzes the reversible oxidation-reduction of methionine sulfoxide in proteins to methionine. The sequence is that of Peptide methionine sulfoxide reductase MsrA from Leptospira borgpetersenii serovar Hardjo-bovis (strain JB197).